The chain runs to 670 residues: Thrombospondin-type laminin G domain and EAR repeat-containing protein (670 aa).

Residues 1–20 form the signal peptide; the sequence is MSALLMLCAVLLLLGTPSRG. In terms of domain architecture, Laminin G-like spans 59 to 278; it reads GLQFSATEPR…KVTLGSRPPC (220 aa). EAR repeat units follow at residues 314–359, 361–409, 413–461, 465–513, 515–571, 575–623, and 626–669; these read DYVE…KWTD, KFVS…KWSP, KFTL…RWNP, LFEA…IWLV, AFQL…ELNI, TFVK…RWQG, and GFVA…KLRT. An N-linked (GlcNAc...) asparagine glycan is attached at Asn-498.

As to expression, in the organ of Corti, expression at postnatal day 1 (P1) is restricted to the basal region of the stereocilia of inner and outer hair cells (at protein level). Expressed in the organ of Corti at P1 and P7, in cochlear ganglion, stria vascularis and vestibular ends at P7, and in inferior colliculus, remaining brainstem, cerebellum, brain hemispheres and retina at P1, P7 and in the adult. Also detected in adult liver, lung, kidney, intestine and testis but not in heart or skeletal muscle.

Its subcellular location is the secreted. The protein resides in the cell surface. It localises to the cell projection. The protein localises to the stereocilium. Functionally, plays a critical role in tooth and hair follicle morphogenesis through regulation of the Notch signaling pathway. May play a role in development or function of the auditory system. The chain is Thrombospondin-type laminin G domain and EAR repeat-containing protein from Mus musculus (Mouse).